Consider the following 310-residue polypeptide: Glycine--tRNA ligase alpha subunit (310 aa).

The protein belongs to the class-II aminoacyl-tRNA synthetase family. As to quaternary structure, tetramer of two alpha and two beta subunits.

It is found in the cytoplasm. The enzyme catalyses tRNA(Gly) + glycine + ATP = glycyl-tRNA(Gly) + AMP + diphosphate. The protein is Glycine--tRNA ligase alpha subunit of Aliivibrio salmonicida (strain LFI1238) (Vibrio salmonicida (strain LFI1238)).